Reading from the N-terminus, the 223-residue chain is Urease subunit alpha (223 aa).

The segment at 1 to 101 (MHFTQQQLQR…LVTIHEPIAN (101 aa)) is urease gamma. A urease beta region spans residues 102–223 (DDKIKAGEIF…LSKAKEKGFL (122 aa)).

It in the N-terminal section; belongs to the urease gamma subunit family. This sequence in the C-terminal section; belongs to the urease beta subunit family. As to quaternary structure, heterohexamer of 3 UreA (alpha) and 3 UreB (beta) subunits.

The protein resides in the cytoplasm. It carries out the reaction urea + 2 H2O + H(+) = hydrogencarbonate + 2 NH4(+). It participates in nitrogen metabolism; urea degradation; CO(2) and NH(3) from urea (urease route): step 1/1. The sequence is that of Urease subunit alpha from Campylobacter lari.